A 510-amino-acid chain; its full sequence is Maturase K (510 aa).

The protein belongs to the intron maturase 2 family. MatK subfamily.

It is found in the plastid. The protein localises to the chloroplast. Usually encoded in the trnK tRNA gene intron. Probably assists in splicing its own and other chloroplast group II introns. The sequence is that of Maturase K from Cestrum elegans (Red cestrum).